We begin with the raw amino-acid sequence, 317 residues long: Aspartate carbamoyltransferase catalytic subunit (317 aa).

Residues R65 and T66 each contribute to the carbamoyl phosphate site. K93 serves as a coordination point for L-aspartate. R115, H145, and Q148 together coordinate carbamoyl phosphate. The L-aspartate site is built by R178 and R233. Residues G274 and P275 each contribute to the carbamoyl phosphate site.

Belongs to the aspartate/ornithine carbamoyltransferase superfamily. ATCase family. In terms of assembly, heterododecamer (2C3:3R2) of six catalytic PyrB chains organized as two trimers (C3), and six regulatory PyrI chains organized as three dimers (R2).

The catalysed reaction is carbamoyl phosphate + L-aspartate = N-carbamoyl-L-aspartate + phosphate + H(+). The protein operates within pyrimidine metabolism; UMP biosynthesis via de novo pathway; (S)-dihydroorotate from bicarbonate: step 2/3. Functionally, catalyzes the condensation of carbamoyl phosphate and aspartate to form carbamoyl aspartate and inorganic phosphate, the committed step in the de novo pyrimidine nucleotide biosynthesis pathway. The protein is Aspartate carbamoyltransferase catalytic subunit of Bordetella parapertussis (strain 12822 / ATCC BAA-587 / NCTC 13253).